The primary structure comprises 170 residues: 6,7-dimethyl-8-ribityllumazine synthase 2 (170 aa).

5-amino-6-(D-ribitylamino)uracil is bound by residues Trp25, 59 to 61 (AFE), and 83 to 85 (LVV). Residue Arg91 is the Proton donor of the active site. Ser116 provides a ligand contact to 5-amino-6-(D-ribitylamino)uracil. Residue His130 coordinates (2S)-2-hydroxy-3-oxobutyl phosphate.

The protein belongs to the DMRL synthase family. In terms of assembly, forms an icosahedral capsid composed of 60 subunits, arranged as a dodecamer of pentamers.

It catalyses the reaction (2S)-2-hydroxy-3-oxobutyl phosphate + 5-amino-6-(D-ribitylamino)uracil = 6,7-dimethyl-8-(1-D-ribityl)lumazine + phosphate + 2 H2O + H(+). It functions in the pathway cofactor biosynthesis; riboflavin biosynthesis; riboflavin from 2-hydroxy-3-oxobutyl phosphate and 5-amino-6-(D-ribitylamino)uracil: step 1/2. Its function is as follows. Catalyzes the formation of 6,7-dimethyl-8-ribityllumazine by condensation of 5-amino-6-(D-ribitylamino)uracil with 3,4-dihydroxy-2-butanone 4-phosphate. This is the penultimate step in the biosynthesis of riboflavin. The protein is 6,7-dimethyl-8-ribityllumazine synthase 2 of Pseudomonas syringae pv. tomato (strain ATCC BAA-871 / DC3000).